The following is a 149-amino-acid chain: UPF0260 protein Psyr_1567 (149 aa).

It belongs to the UPF0260 family.

This is UPF0260 protein Psyr_1567 from Pseudomonas syringae pv. syringae (strain B728a).